A 545-amino-acid chain; its full sequence is Ribulokinase (545 aa).

Belongs to the ribulokinase family.

The catalysed reaction is D-ribulose + ATP = D-ribulose 5-phosphate + ADP + H(+). The enzyme catalyses L-ribulose + ATP = L-ribulose 5-phosphate + ADP + H(+). Its pathway is carbohydrate degradation; L-arabinose degradation via L-ribulose; D-xylulose 5-phosphate from L-arabinose (bacterial route): step 2/3. This Staphylococcus aureus (strain USA300) protein is Ribulokinase.